The primary structure comprises 1123 residues: Probable serine/threonine-protein kinase nek3 (1123 aa).

Positions Tyr-4–Ile-264 constitute a Protein kinase domain. Residues Ile-10 to Ala-18 and Lys-33 each bind ATP. The Proton acceptor role is filled by Asp-130. Composition is skewed to low complexity over residues Asn-283–Ser-307 and Asn-327–Lys-415. Disordered regions lie at residues Asn-283–Val-310, Asn-325–Lys-415, Ser-440–Gln-802, Ser-866–Met-887, Ser-908–Asp-937, and Ser-990–Asn-1020. Residues Ser-440 to Ile-459 show a composition bias toward polar residues. 4 stretches are compositionally biased toward low complexity: residues Ser-478–Val-529, Ser-557–Gln-576, Ser-588–Ser-617, and Asn-642–Asn-653. Polar residues predominate over residues Arg-654–Pro-665. Low complexity-rich tracts occupy residues Thr-666–Thr-696, Ser-712–Thr-738, and Ser-752–Gln-802. A compositionally biased stretch (low complexity) spans Ser-908–Ile-935.

This sequence belongs to the protein kinase superfamily. NEK Ser/Thr protein kinase family. NIMA subfamily.

It carries out the reaction L-seryl-[protein] + ATP = O-phospho-L-seryl-[protein] + ADP + H(+). The enzyme catalyses L-threonyl-[protein] + ATP = O-phospho-L-threonyl-[protein] + ADP + H(+). This is Probable serine/threonine-protein kinase nek3 (nek3) from Dictyostelium discoideum (Social amoeba).